Consider the following 279-residue polypeptide: High choriolytic enzyme 2 (279 aa).

The N-terminal stretch at 1 to 20 (MNLASSACLLLLFLLGIAQA) is a signal peptide. Positions 21–79 (LPVQNEEGHEEGNKEGHGEEGVEEGDEDDFVDFTTRILTSNNNTDQLLLEGDLVAPTNR) are cleaved as a propeptide — activation peptide. A compositionally biased stretch (basic and acidic residues) spans 26-40 (EEGHEEGNKEGHGEE). The interval 26-46 (EEGHEEGNKEGHGEEGVEEGD) is disordered. A glycan (N-linked (GlcNAc...) asparagine) is linked at N62. A Peptidase M12A domain is found at 80–279 (NAMKCWYNSC…TRSNVLYNCR (200 aa)). Disulfide bonds link C84–C89, C129–C278, and C150–C170. Zn(2+) is bound at residue H178. E179 is an active-site residue. Residues H182 and H188 each contribute to the Zn(2+) site.

Zn(2+) serves as cofactor.

The protein resides in the zymogen granule. It carries out the reaction Hydrolysis of the inner layer of fish egg envelope. Also hydrolysis of casein and small molecule substrates such as succinyl-Leu-Leu-Val-Tyr-|-7-(4-methyl)coumarylamide.. In terms of biological role, participates in the breakdown of the egg envelope, which is derived from the egg extracellular matrix, at the time of hatching. Thus allowing the newly hatched fish to swim free. HCE binds tightly to the egg envelope while it exerts the choriolytic swelling action. This is High choriolytic enzyme 2 (hceb) from Oryzias latipes (Japanese rice fish).